The primary structure comprises 352 residues: N-acetyl-gamma-glutamyl-phosphate reductase (352 aa).

Cys151 is a catalytic residue.

The protein belongs to the NAGSA dehydrogenase family. Type 1 subfamily.

The protein resides in the cytoplasm. It carries out the reaction N-acetyl-L-glutamate 5-semialdehyde + phosphate + NADP(+) = N-acetyl-L-glutamyl 5-phosphate + NADPH + H(+). Its pathway is amino-acid biosynthesis; L-arginine biosynthesis; N(2)-acetyl-L-ornithine from L-glutamate: step 3/4. Catalyzes the NADPH-dependent reduction of N-acetyl-5-glutamyl phosphate to yield N-acetyl-L-glutamate 5-semialdehyde. The polypeptide is N-acetyl-gamma-glutamyl-phosphate reductase (Renibacterium salmoninarum (strain ATCC 33209 / DSM 20767 / JCM 11484 / NBRC 15589 / NCIMB 2235)).